A 49-amino-acid chain; its full sequence is Sporulation protein YjcZ (49 aa).

A helical transmembrane segment spans residues 29-49; the sequence is STFVLLVVLFILLIIVGASFF.

It belongs to the SscA family.

The protein resides in the membrane. The sequence is that of Sporulation protein YjcZ (yjcZ) from Bacillus subtilis (strain 168).